The primary structure comprises 297 residues: Large ribosomal subunit protein uL10 (297 aa).

Belongs to the universal ribosomal protein uL10 family. In terms of assembly, part of the 50S ribosomal subunit. Forms part of the ribosomal stalk which helps the ribosome interact with GTP-bound translation factors. Forms a heptameric L10(L12)2(L12)2(L12)2 complex, where L10 forms an elongated spine to which the L12 dimers bind in a sequential fashion.

Forms part of the ribosomal stalk, playing a central role in the interaction of the ribosome with GTP-bound translation factors. This is Large ribosomal subunit protein uL10 from Methanococcus voltae.